Reading from the N-terminus, the 312-residue chain is Retinol dehydrogenase 8 (312 aa).

9-18 (LISGCSSGIG) is an NADP(+) binding site. 3 helical membrane-spanning segments follow: residues 87-107 (VLVN…SLAA), 138-158 (IVVV…VYAA), and 170-190 (LAVQ…GPVV). S143 provides a ligand contact to substrate. Y156 acts as the Proton acceptor in catalysis.

This sequence belongs to the short-chain dehydrogenases/reductases (SDR) family. As to expression, detected in photoreceptor outer segments in the retina (at protein level).

It is found in the membrane. The catalysed reaction is all-trans-retinol + NADP(+) = all-trans-retinal + NADPH + H(+). Retinol dehydrogenase with a clear preference for NADP. Converts all-trans-retinal to all-trans-retinol. May play a role in the regeneration of visual pigment at high light intensity. This chain is Retinol dehydrogenase 8 (RDH8), found in Bos taurus (Bovine).